The sequence spans 424 residues: Homoserine O-succinyltransferase (424 aa).

The AB hydrolase-1 domain occupies 67–381; the sequence is NAVLVCHALN…PHGHDAFLLD (315 aa). Serine 173 functions as the Nucleophile in the catalytic mechanism. Arginine 243 lines the substrate pocket. Catalysis depends on residues aspartate 342 and histidine 375. Aspartate 376 serves as a coordination point for substrate.

Belongs to the AB hydrolase superfamily. MetX family. As to quaternary structure, homodimer.

The protein resides in the cytoplasm. The enzyme catalyses L-homoserine + succinyl-CoA = O-succinyl-L-homoserine + CoA. It functions in the pathway amino-acid biosynthesis; L-methionine biosynthesis via de novo pathway; O-succinyl-L-homoserine from L-homoserine: step 1/1. Functionally, transfers a succinyl group from succinyl-CoA to L-homoserine, forming succinyl-L-homoserine. In vitro, also has serine succinyl transferase activity. The protein is Homoserine O-succinyltransferase of Bordetella petrii (strain ATCC BAA-461 / DSM 12804 / CCUG 43448).